An 85-amino-acid chain; its full sequence is Large ribosomal subunit protein bL31B (85 aa).

It belongs to the bacterial ribosomal protein bL31 family. Type B subfamily. In terms of assembly, part of the 50S ribosomal subunit.

This chain is Large ribosomal subunit protein bL31B, found in Pseudomonas entomophila (strain L48).